A 533-amino-acid polypeptide reads, in one-letter code: Acid-sensing ion channel 2 (533 aa).

Residues 1-16 (MDLKEACGSEASRETE) are compositionally biased toward basic and acidic residues. Residues 1–23 (MDLKEACGSEASRETESGGMGSL) form a disordered region. Residues 1 to 68 (MDLKEACGSE…STSRRLLWSA (68 aa)) lie on the Cytoplasmic side of the membrane. The chain crosses the membrane as a helical span at residues 69-89 (ALLASLVLLVLESTERLAYFL). The Extracellular portion of the chain corresponds to 90–445 (SYPHVTSVDA…ETIEQKKAYE (356 aa)). Cystine bridges form between C113–C214, C310–C385, C328–C381, C332–C379, C341–C363, and C343–C355. A glycan (N-linked (GlcNAc...) asparagine) is linked at N163. N-linked (GlcNAc...) asparagine glycans are attached at residues N386 and N413. The chain crosses the membrane as a helical span at residues 446–466 (VAGLLGDIGGQMGLFIGASIL). The GAS motif; ion selectivity filter motif lies at 462–464 (GAS). Topologically, residues 467 to 533 (TLLELFDYAY…TLGTLEEIAC (67 aa)) are cytoplasmic.

Belongs to the amiloride-sensitive sodium channel (TC 1.A.6) family. ASIC2 subfamily. In terms of assembly, can form homotrimers; probably non-functional. Heterotrimer; could form functional heterotrimers producing channel with specific properties depending on their composition. In terms of tissue distribution, expressed in central nervous system.

Its subcellular location is the cell membrane. The enzyme catalyses Na(+)(in) = Na(+)(out). With respect to regulation, inhibited by the diuretic drug amiloride. In terms of biological role, could form pH-gated heterotrimeric sodium channels that act as postsynaptic excitatory sensors in the nervous system, generating rapid, transient inward currents that fully desensitize upon extracellular acidification. The sequence is that of Acid-sensing ion channel 2 (asic2) from Danio rerio (Zebrafish).